The primary structure comprises 734 residues: Photosystem I P700 chlorophyll a apoprotein A2 (734 aa).

Helical transmembrane passes span 46–69 (IFASHFGQLAIIFLWTSGNLFHVA), 135–158 (LYTGALFLLFLSALSLIGGWLHLQ), 175–199 (LNHHLSGLFGVSSLAWTGHLVHVAI), 273–291 (MAHHHLAIAILFLIAGHMY), 330–353 (IHFQLGLALASLGVITSLVAQHMY), 369–395 (AALYTHHQYIAGFIMTGAFAHGAIFFI), 417–439 (AIISHLSWASLFLGFHTLGLYVH), and 517–535 (FLVHHAIALGLHTTTLILV). Cys559 and Cys568 together coordinate [4Fe-4S] cluster. The next 2 membrane-spanning stretches (helical) occupy residues 575 to 596 (AFYLAVFWMLNTIGWVTFYWHW) and 643 to 665 (LSVWAWMFLFGHLVWATGFMFLI). 3 residues coordinate chlorophyll a: His654, Met662, and Tyr670. Trp671 serves as a coordination point for phylloquinone. A helical membrane pass occupies residues 707–727 (LVGLAHFSVGYIFTYAAFLIA).

This sequence belongs to the PsaA/PsaB family. In terms of assembly, the PsaA/B heterodimer binds the P700 chlorophyll special pair and subsequent electron acceptors. PSI consists of a core antenna complex that captures photons, and an electron transfer chain that converts photonic excitation into a charge separation. The eukaryotic PSI reaction center is composed of at least 11 subunits. The cofactor is P700 is a chlorophyll a/chlorophyll a' dimer, A0 is one or more chlorophyll a, A1 is one or both phylloquinones and FX is a shared 4Fe-4S iron-sulfur center..

It is found in the plastid. It localises to the chloroplast thylakoid membrane. The catalysed reaction is reduced [plastocyanin] + hnu + oxidized [2Fe-2S]-[ferredoxin] = oxidized [plastocyanin] + reduced [2Fe-2S]-[ferredoxin]. Functionally, psaA and PsaB bind P700, the primary electron donor of photosystem I (PSI), as well as the electron acceptors A0, A1 and FX. PSI is a plastocyanin-ferredoxin oxidoreductase, converting photonic excitation into a charge separation, which transfers an electron from the donor P700 chlorophyll pair to the spectroscopically characterized acceptors A0, A1, FX, FA and FB in turn. Oxidized P700 is reduced on the lumenal side of the thylakoid membrane by plastocyanin. The chain is Photosystem I P700 chlorophyll a apoprotein A2 from Crucihimalaya wallichii (Rock-cress).